The chain runs to 58 residues: Large ribosomal subunit protein uL30 (58 aa).

Belongs to the universal ribosomal protein uL30 family. As to quaternary structure, part of the 50S ribosomal subunit.

This Pseudomonas savastanoi pv. phaseolicola (strain 1448A / Race 6) (Pseudomonas syringae pv. phaseolicola (strain 1448A / Race 6)) protein is Large ribosomal subunit protein uL30.